A 1783-amino-acid polypeptide reads, in one-letter code: Chitin synthase A (1783 aa).

N-linked (GlcNAc...) asparagine glycans are attached at residues asparagine 159, asparagine 637, asparagine 652, asparagine 664, and asparagine 669. 2 helical membrane passes run isoleucine 745–valine 765 and leucine 781–phenylalanine 801. Residues asparagine 1014 and asparagine 1018 are each glycosylated (N-linked (GlcNAc...) asparagine). The helical transmembrane segment at isoleucine 1051–leucine 1071 threads the bilayer. N-linked (GlcNAc...) asparagine glycosylation occurs at asparagine 1416. 3 helical membrane-spanning segments follow: residues phenylalanine 1441–glycine 1461, phenylalanine 1474–isoleucine 1494, and isoleucine 1502–tyrosine 1522. Residues asparagine 1529 and asparagine 1617 are each glycosylated (N-linked (GlcNAc...) asparagine). The tract at residues threonine 1659–glutamine 1724 is disordered. Over residues arginine 1664–proline 1688 the composition is skewed to polar residues. A glycan (N-linked (GlcNAc...) asparagine) is linked at asparagine 1695. The DEK-C domain occupies glycine 1725–alanine 1781.

Belongs to the chitin synthase family. Class V subfamily.

Its subcellular location is the cell membrane. It catalyses the reaction [(1-&gt;4)-N-acetyl-beta-D-glucosaminyl](n) + UDP-N-acetyl-alpha-D-glucosamine = [(1-&gt;4)-N-acetyl-beta-D-glucosaminyl](n+1) + UDP + H(+). Its function is as follows. Polymerizes chitin, a structural polymer of the cell wall and septum, by transferring the sugar moiety of UDP-GlcNAc to the non-reducing end of the growing chitin polymer. Responsible for about 29% of the chitin in conidial walls, is essential for conidial wall strength in media with high water potential and contributes to strength of hyphal tips. The sequence is that of Chitin synthase A from Colletotrichum graminicola (Maize anthracnose fungus).